The chain runs to 512 residues: MFEIRDVDLAGRIGRIYTQHGVVETPAFFPVIDVYRQEVSVDEVRAAGFGQVITNAYLLWKRFGWEAAEKGVHRILGFPGVVMTDSGAYQILEYGGVELSQGEVVEYQKRLGSDIAVILDIPTGDVGRREAEESVRETIRRALEARVMIEGDERIWVYPVQGGRYFDLVEESARVGGRLGFYRMYGIGSPTVFLERYMYHVVVEAVYRAKKHLPWGRPVHLFGAGHPLIFPYAVALGVDTFDSASYILYAREGRYITEYGVYRIEDLDYLPCSCPVCSRYTPQELREMDRVERTRLLALHNLYVISASMRRVKQAIREGRLWELLEETSRKHPSTARVMARMRRYIDALEKGSARGRGVVRGVRAYGLESLSNPRLSRFSSDAARLVEAMAEKWGGGKAVLKPLDPKPEPGQCESMVGGGEWILFYQPFLGVFPVEACGAYPSLQIDYPQEGLPAEVIGDLASKIASTVSILRGRGFTVRLEYCGKVEWQARAVEALKTAAAGDLPTVEACG.

D85 (nucleophile) is an active-site residue. D120 contacts substrate. Zn(2+)-binding residues include C272, C274, and C277.

The protein belongs to the archaeosine tRNA-ribosyltransferase family. Zn(2+) serves as cofactor.

The catalysed reaction is guanosine(15) in tRNA + 7-cyano-7-deazaguanine = 7-cyano-7-carbaguanosine(15) in tRNA + guanine. The protein operates within tRNA modification; archaeosine-tRNA biosynthesis. Its function is as follows. Exchanges the guanine residue with 7-cyano-7-deazaguanine (preQ0) at position 15 in the dihydrouridine loop (D-loop) of archaeal tRNAs. The polypeptide is tRNA-guanine(15) transglycosylase (Aeropyrum pernix (strain ATCC 700893 / DSM 11879 / JCM 9820 / NBRC 100138 / K1)).